The following is a 342-amino-acid chain: Dual-specificity RNA methyltransferase RlmN (342 aa).

The active-site Proton acceptor is Glu-92. The 232-residue stretch at 98-329 folds into the Radical SAM core domain; that stretch reads DLPRSTLCVS…THVRRSRGGE (232 aa). A disulfide bond links Cys-105 and Cys-334. Residues Cys-112, Cys-116, and Cys-119 each coordinate [4Fe-4S] cluster. Residues 161–162, Ser-193, 215–217, and Asn-291 each bind S-adenosyl-L-methionine; these read GE and SLH. Cys-334 functions as the S-methylcysteine intermediate in the catalytic mechanism.

Belongs to the radical SAM superfamily. RlmN family. The cofactor is [4Fe-4S] cluster.

The protein resides in the cytoplasm. The enzyme catalyses adenosine(2503) in 23S rRNA + 2 reduced [2Fe-2S]-[ferredoxin] + 2 S-adenosyl-L-methionine = 2-methyladenosine(2503) in 23S rRNA + 5'-deoxyadenosine + L-methionine + 2 oxidized [2Fe-2S]-[ferredoxin] + S-adenosyl-L-homocysteine. It catalyses the reaction adenosine(37) in tRNA + 2 reduced [2Fe-2S]-[ferredoxin] + 2 S-adenosyl-L-methionine = 2-methyladenosine(37) in tRNA + 5'-deoxyadenosine + L-methionine + 2 oxidized [2Fe-2S]-[ferredoxin] + S-adenosyl-L-homocysteine. Functionally, specifically methylates position 2 of adenine 2503 in 23S rRNA and position 2 of adenine 37 in tRNAs. m2A2503 modification seems to play a crucial role in the proofreading step occurring at the peptidyl transferase center and thus would serve to optimize ribosomal fidelity. In Syntrophobacter fumaroxidans (strain DSM 10017 / MPOB), this protein is Dual-specificity RNA methyltransferase RlmN.